A 101-amino-acid chain; its full sequence is RNA-binding protein Hfq (101 aa).

Residues 9-68 (DPYLNALRRERIPVSIYLVNGIKLQGQIESFDQFIILLKNTVSQMVYKHAISTVVPARSI) form the Sm domain. The interval 68-91 (ISHNNNGSSQAQAPQQAVQTTQPV) is disordered. The segment covering 77-91 (QAQAPQQAVQTTQPV) has biased composition (low complexity).

This sequence belongs to the Hfq family. In terms of assembly, homohexamer.

Functionally, RNA chaperone that binds small regulatory RNA (sRNAs) and mRNAs to facilitate mRNA translational regulation in response to envelope stress, environmental stress and changes in metabolite concentrations. Also binds with high specificity to tRNAs. The sequence is that of RNA-binding protein Hfq from Haemophilus ducreyi (strain 35000HP / ATCC 700724).